The primary structure comprises 331 residues: Cathepsin S (331 aa).

Residues Met-1 to Ala-16 form the signal peptide. Positions His-17–Lys-114 are cleaved as a propeptide — activation peptide. A glycan (N-linked (GlcNAc...) asparagine) is linked at Asn-104. 4 cysteine pairs are disulfide-bonded: Cys-126–Cys-224, Cys-136–Cys-180, Cys-170–Cys-213, and Cys-272–Cys-320. Cys-139 is a catalytic residue. Active-site residues include His-278 and Asn-298.

It belongs to the peptidase C1 family. As to quaternary structure, monomer.

The protein localises to the lysosome. It is found in the secreted. Its subcellular location is the cytoplasmic vesicle. The protein resides in the phagosome. It carries out the reaction Similar to cathepsin L, but with much less activity on Z-Phe-Arg-|-NHMec, and more activity on the Z-Val-Val-Arg-|-Xaa compound.. In terms of biological role, thiol protease. Key protease responsible for the removal of the invariant chain from MHC class II molecules and MHC class II antigen presentation. The bond-specificity of this proteinase is in part similar to the specificities of cathepsin L. This Bos taurus (Bovine) protein is Cathepsin S (CTSS).